Here is a 361-residue protein sequence, read N- to C-terminus: Deoxyhypusine hydroxylase (361 aa).

HEAT-like PBS-type repeat units follow at residues 59 to 85 (LKHE…VLEN), 94 to 120 (VRHE…YMQD), 183 to 211 (QRYR…GFRD), and 216 to 242 (FRHE…RLRD). Fe cation-binding residues include His61, Glu62, His96, and Glu97. Fe cation-binding residues include His218, Glu219, His251, and Glu252.

It belongs to the deoxyhypusine hydroxylase family. Requires Fe(2+) as cofactor.

The protein resides in the cytoplasm. It is found in the nucleus. It catalyses the reaction [eIF5A protein]-deoxyhypusine + AH2 + O2 = [eIF5A protein]-hypusine + A + H2O. Its pathway is protein modification; eIF5A hypusination. Its function is as follows. Catalyzes the hydroxylation of the N(6)-(4-aminobutyl)-L-lysine intermediate to form hypusine, an essential post-translational modification only found in mature eIF-5A factor. The protein is Deoxyhypusine hydroxylase of Cryptococcus neoformans var. neoformans serotype D (strain JEC21 / ATCC MYA-565) (Filobasidiella neoformans).